The chain runs to 246 residues: 3-deoxy-manno-octulosonate cytidylyltransferase (246 aa).

The protein belongs to the KdsB family.

Its subcellular location is the cytoplasm. The enzyme catalyses 3-deoxy-alpha-D-manno-oct-2-ulosonate + CTP = CMP-3-deoxy-beta-D-manno-octulosonate + diphosphate. It functions in the pathway nucleotide-sugar biosynthesis; CMP-3-deoxy-D-manno-octulosonate biosynthesis; CMP-3-deoxy-D-manno-octulosonate from 3-deoxy-D-manno-octulosonate and CTP: step 1/1. The protein operates within bacterial outer membrane biogenesis; lipopolysaccharide biosynthesis. Activates KDO (a required 8-carbon sugar) for incorporation into bacterial lipopolysaccharide in Gram-negative bacteria. In Rickettsia felis (strain ATCC VR-1525 / URRWXCal2) (Rickettsia azadi), this protein is 3-deoxy-manno-octulosonate cytidylyltransferase.